The sequence spans 786 residues: LPS-assembly protein LptD (786 aa).

An N-terminal signal peptide occupies residues 1–24; it reads MSFTSRSLLASFTGCLLYGTPAIA.

Belongs to the LptD family. In terms of assembly, component of the lipopolysaccharide transport and assembly complex. Interacts with LptE and LptA.

It is found in the cell outer membrane. Together with LptE, is involved in the assembly of lipopolysaccharide (LPS) at the surface of the outer membrane. This is LPS-assembly protein LptD from Aliivibrio fischeri (strain ATCC 700601 / ES114) (Vibrio fischeri).